The sequence spans 360 residues: Peptide chain release factor 1 (360 aa).

Position 237 is an N5-methylglutamine (Gln237).

Belongs to the prokaryotic/mitochondrial release factor family. Methylated by PrmC. Methylation increases the termination efficiency of RF1.

It is found in the cytoplasm. In terms of biological role, peptide chain release factor 1 directs the termination of translation in response to the peptide chain termination codons UAG and UAA. The polypeptide is Peptide chain release factor 1 (Saccharophagus degradans (strain 2-40 / ATCC 43961 / DSM 17024)).